A 369-amino-acid chain; its full sequence is Tryptophan 2,3-dioxygenase 2 (369 aa).

Substrate is bound by residues 36–40 and Arg-107; that span reads FIVVH. His-303 serves as a coordination point for heme. Thr-317 is a substrate binding site.

Belongs to the tryptophan 2,3-dioxygenase family. Homotetramer. Heme is required as a cofactor.

It carries out the reaction L-tryptophan + O2 = N-formyl-L-kynurenine. It functions in the pathway amino-acid degradation; L-tryptophan degradation via kynurenine pathway; L-kynurenine from L-tryptophan: step 1/2. Its function is as follows. Heme-dependent dioxygenase that catalyzes the oxidative cleavage of the L-tryptophan (L-Trp) pyrrole ring and converts L-tryptophan to N-formyl-L-kynurenine. Catalyzes the oxidative cleavage of the indole moiety. The polypeptide is Tryptophan 2,3-dioxygenase 2 (Ralstonia nicotianae (strain ATCC BAA-1114 / GMI1000) (Ralstonia solanacearum)).